The following is a 423-amino-acid chain: D-threonate kinase (423 aa).

Residues Asp-9, Arg-51, and 81–84 (KIDS) each bind substrate. ATP-binding positions include Ser-245, 355-358 (GGDI), and Gly-401.

It belongs to the four-carbon acid sugar kinase family.

It catalyses the reaction D-threonate + ATP = 4-O-phospho-D-threonate + ADP + H(+). Its function is as follows. Catalyzes the ATP-dependent phosphorylation of D-threonate to D-threonate 4-phosphate. Can also phosphorylate 4-hydroxy-L-threonine, with lower efficiency. This side reaction may serve to deal with the toxicity of 4-hydroxy-L-threonine by converting it into 4-hydroxy-L-threonine 4-phosphate, a useful product that can be used by PdxA2. This is D-threonate kinase from Salmonella typhimurium (strain LT2 / SGSC1412 / ATCC 700720).